The chain runs to 202 residues: Glycerol-3-phosphate acyltransferase (202 aa).

Helical transmembrane passes span 11–31 (ALIA…GLIL), 87–107 (PALA…WLGF), 116–136 (FIGV…AIWL), and 158–178 (VILW…LAAL).

Belongs to the PlsY family. Probably interacts with PlsX.

Its subcellular location is the cell inner membrane. It catalyses the reaction an acyl phosphate + sn-glycerol 3-phosphate = a 1-acyl-sn-glycero-3-phosphate + phosphate. Its pathway is lipid metabolism; phospholipid metabolism. Catalyzes the transfer of an acyl group from acyl-phosphate (acyl-PO(4)) to glycerol-3-phosphate (G3P) to form lysophosphatidic acid (LPA). This enzyme utilizes acyl-phosphate as fatty acyl donor, but not acyl-CoA or acyl-ACP. The sequence is that of Glycerol-3-phosphate acyltransferase from Methylorubrum populi (strain ATCC BAA-705 / NCIMB 13946 / BJ001) (Methylobacterium populi).